Consider the following 220-residue polypeptide: Ribosomal RNA small subunit methyltransferase G (220 aa).

The S-adenosyl-L-methionine site is built by G78, L83, and R144.

This sequence belongs to the methyltransferase superfamily. RNA methyltransferase RsmG family.

The protein localises to the cytoplasm. It carries out the reaction guanosine(527) in 16S rRNA + S-adenosyl-L-methionine = N(7)-methylguanosine(527) in 16S rRNA + S-adenosyl-L-homocysteine. Functionally, specifically methylates the N7 position of guanine in position 527 of 16S rRNA. This chain is Ribosomal RNA small subunit methyltransferase G, found in Alkalilimnicola ehrlichii (strain ATCC BAA-1101 / DSM 17681 / MLHE-1).